We begin with the raw amino-acid sequence, 82 residues long: RNA-binding protein Hfq (82 aa).

The region spanning 11–71 (DTFLNHVRKT…ISTIMPGAPI (61 aa)) is the Sm domain.

The protein belongs to the Hfq family. As to quaternary structure, homohexamer.

In terms of biological role, RNA chaperone that binds small regulatory RNA (sRNAs) and mRNAs to facilitate mRNA translational regulation in response to envelope stress, environmental stress and changes in metabolite concentrations. Also binds with high specificity to tRNAs. This Rhodopseudomonas palustris (strain TIE-1) protein is RNA-binding protein Hfq.